Reading from the N-terminus, the 990-residue chain is Glycine dehydrogenase (decarboxylating) (990 aa).

An N6-(pyridoxal phosphate)lysine modification is found at Lys726.

This sequence belongs to the GcvP family. In terms of assembly, the glycine cleavage system is composed of four proteins: P, T, L and H. Pyridoxal 5'-phosphate is required as a cofactor.

It catalyses the reaction N(6)-[(R)-lipoyl]-L-lysyl-[glycine-cleavage complex H protein] + glycine + H(+) = N(6)-[(R)-S(8)-aminomethyldihydrolipoyl]-L-lysyl-[glycine-cleavage complex H protein] + CO2. In terms of biological role, the glycine cleavage system catalyzes the degradation of glycine. The P protein binds the alpha-amino group of glycine through its pyridoxal phosphate cofactor; CO(2) is released and the remaining methylamine moiety is then transferred to the lipoamide cofactor of the H protein. This Rhodopseudomonas palustris (strain ATCC BAA-98 / CGA009) protein is Glycine dehydrogenase (decarboxylating).